We begin with the raw amino-acid sequence, 556 residues long: 5-aminolevulinate synthase, mitochondrial (556 aa).

The N-terminal 46 residues, 1–46 (MDSLARQSAKICPFVSRVTSSMQQVQVLHKTNMSAMAQQCPVMRRA), are a transit peptide targeting the mitochondrion. Arginine 105, serine 218, and lysine 237 together coordinate substrate. Pyridoxal 5'-phosphate contacts are provided by serine 270, histidine 298, and threonine 342. The active site involves lysine 345. The residue at position 345 (lysine 345) is an N6-(pyridoxal phosphate)lysine. Pyridoxal 5'-phosphate contacts are provided by threonine 374 and serine 375. Position 460 (threonine 460) interacts with substrate.

This sequence belongs to the class-II pyridoxal-phosphate-dependent aminotransferase family. As to quaternary structure, homodimer. It depends on pyridoxal 5'-phosphate as a cofactor.

It localises to the mitochondrion matrix. It carries out the reaction succinyl-CoA + glycine + H(+) = 5-aminolevulinate + CO2 + CoA. It functions in the pathway porphyrin-containing compound metabolism; protoporphyrin-IX biosynthesis; 5-aminolevulinate from glycine: step 1/1. In terms of biological role, catalyzes the synthesis of 5-aminolevulinate (ALA) from succinyl-CoA and glycine, the first and rate-limiting step in heme biosynthesis. This Eremothecium gossypii (strain ATCC 10895 / CBS 109.51 / FGSC 9923 / NRRL Y-1056) (Yeast) protein is 5-aminolevulinate synthase, mitochondrial (HEM1).